A 388-amino-acid chain; its full sequence is Cytochrome b (388 aa).

The next 4 helical transmembrane spans lie at 38–58, 82–104, 119–139, and 185–205; these read FGCL…FLAM, WLLR…LHIF, VWCL…IGYV, and FFSL…LHLA. Residues His-88 and His-102 each contribute to the heme b site. Heme b-binding residues include His-189 and His-203. His-208 is an a ubiquinone binding site. 4 consecutive transmembrane segments (helical) span residues 231 to 251, 295 to 315, 327 to 347, and 354 to 373; these read FYVK…IWIF, AGGV…PFFK, IHQG…WIGC, and FVTI…AITP.

It belongs to the cytochrome b family. The main subunits of complex b-c1 are: cytochrome b, cytochrome c1 and the Rieske protein. Requires heme b as cofactor.

The protein localises to the mitochondrion inner membrane. Functionally, component of the ubiquinol-cytochrome c reductase complex (complex III or cytochrome b-c1 complex) that is part of the mitochondrial respiratory chain. The b-c1 complex mediates electron transfer from ubiquinol to cytochrome c. Contributes to the generation of a proton gradient across the mitochondrial membrane that is then used for ATP synthesis. This Zea mays (Maize) protein is Cytochrome b (MT-CYB).